Consider the following 348-residue polypeptide: tRNA N6-adenosine threonylcarbamoyltransferase (348 aa).

Residues His116 and His120 each coordinate Fe cation. Substrate-binding positions include 138–142 (IISGG), Asp171, Gly184, and Asn282. Asp310 is a Fe cation binding site.

Belongs to the KAE1 / TsaD family. The cofactor is Fe(2+).

It is found in the cytoplasm. It catalyses the reaction L-threonylcarbamoyladenylate + adenosine(37) in tRNA = N(6)-L-threonylcarbamoyladenosine(37) in tRNA + AMP + H(+). Its function is as follows. Required for the formation of a threonylcarbamoyl group on adenosine at position 37 (t(6)A37) in tRNAs that read codons beginning with adenine. Is involved in the transfer of the threonylcarbamoyl moiety of threonylcarbamoyl-AMP (TC-AMP) to the N6 group of A37, together with TsaE and TsaB. TsaD likely plays a direct catalytic role in this reaction. The sequence is that of tRNA N6-adenosine threonylcarbamoyltransferase from Ehrlichia ruminantium (strain Gardel).